The primary structure comprises 471 residues: ATP synthase subunit beta (471 aa).

G156 to T163 contributes to the ATP binding site.

This sequence belongs to the ATPase alpha/beta chains family. In terms of assembly, F-type ATPases have 2 components, CF(1) - the catalytic core - and CF(0) - the membrane proton channel. CF(1) has five subunits: alpha(3), beta(3), gamma(1), delta(1), epsilon(1). CF(0) has three main subunits: a(1), b(2) and c(9-12). The alpha and beta chains form an alternating ring which encloses part of the gamma chain. CF(1) is attached to CF(0) by a central stalk formed by the gamma and epsilon chains, while a peripheral stalk is formed by the delta and b chains.

It localises to the cell inner membrane. The catalysed reaction is ATP + H2O + 4 H(+)(in) = ADP + phosphate + 5 H(+)(out). Functionally, produces ATP from ADP in the presence of a proton gradient across the membrane. The catalytic sites are hosted primarily by the beta subunits. The sequence is that of ATP synthase subunit beta from Nitratidesulfovibrio vulgaris (strain DSM 19637 / Miyazaki F) (Desulfovibrio vulgaris).